Reading from the N-terminus, the 358-residue chain is Chorismate synthase (358 aa).

An NADP(+)-binding site is contributed by Arg-46. FMN is bound by residues Arg-123–Ser-125, Asn-235–Ala-236, Gly-275, Lys-290–Ser-294, and Arg-316.

This sequence belongs to the chorismate synthase family. In terms of assembly, homotetramer. Requires FMNH2 as cofactor.

The catalysed reaction is 5-O-(1-carboxyvinyl)-3-phosphoshikimate = chorismate + phosphate. It participates in metabolic intermediate biosynthesis; chorismate biosynthesis; chorismate from D-erythrose 4-phosphate and phosphoenolpyruvate: step 7/7. Its function is as follows. Catalyzes the anti-1,4-elimination of the C-3 phosphate and the C-6 proR hydrogen from 5-enolpyruvylshikimate-3-phosphate (EPSP) to yield chorismate, which is the branch point compound that serves as the starting substrate for the three terminal pathways of aromatic amino acid biosynthesis. This reaction introduces a second double bond into the aromatic ring system. This chain is Chorismate synthase, found in Aliarcobacter butzleri (strain RM4018) (Arcobacter butzleri).